The following is a 314-amino-acid chain: Fructose-1,6-bisphosphatase class 1 (314 aa).

Mg(2+)-binding residues include E91, D112, L114, and D115. Residues 115–118, Y223, and K254 each bind substrate; that span reads DGSS. Mg(2+) is bound at residue E260.

It belongs to the FBPase class 1 family. Homotetramer. Requires Mg(2+) as cofactor.

The protein localises to the cytoplasm. It carries out the reaction beta-D-fructose 1,6-bisphosphate + H2O = beta-D-fructose 6-phosphate + phosphate. It participates in carbohydrate biosynthesis; gluconeogenesis. This Geobacter metallireducens (strain ATCC 53774 / DSM 7210 / GS-15) protein is Fructose-1,6-bisphosphatase class 1.